Reading from the N-terminus, the 606-residue chain is Elongation factor 4 (606 aa).

Positions isoleucine 10–arginine 192 constitute a tr-type G domain. GTP-binding positions include aspartate 22 to threonine 27 and asparagine 139 to aspartate 142.

This sequence belongs to the TRAFAC class translation factor GTPase superfamily. Classic translation factor GTPase family. LepA subfamily.

It is found in the cell inner membrane. The enzyme catalyses GTP + H2O = GDP + phosphate + H(+). Its function is as follows. Required for accurate and efficient protein synthesis under certain stress conditions. May act as a fidelity factor of the translation reaction, by catalyzing a one-codon backward translocation of tRNAs on improperly translocated ribosomes. Back-translocation proceeds from a post-translocation (POST) complex to a pre-translocation (PRE) complex, thus giving elongation factor G a second chance to translocate the tRNAs correctly. Binds to ribosomes in a GTP-dependent manner. This is Elongation factor 4 from Borreliella burgdorferi (strain ATCC 35210 / DSM 4680 / CIP 102532 / B31) (Borrelia burgdorferi).